The primary structure comprises 1030 residues: Germ cell nuclear acidic protein (1030 aa).

Disordered stretches follow at residues 1-59, 196-245, 266-361, 375-433, 457-594, and 699-764; these read MADH…TEDT, EWNG…TQLA, KRLA…VSSI, TMES…EQFL, LKRS…DLTY, and KLGI…PVAS. The segment covering 20–33 has biased composition (basic and acidic residues); it reads APKDHPEKRNDQKT. Composition is skewed to polar residues over residues 298–316 and 329–349; these read EPNT…TIHN and ETSS…STSG. Positions 505–516 are enriched in polar residues; the sequence is LRTNQTPLNSTR. Basic and acidic residues-rich tracts occupy residues 541 to 553 and 578 to 594; these read NHID…KLID and DSDK…DLTY. Positions 720-748 are enriched in low complexity; sequence TPKTAPPKGTAPPKTSAPPKVSTPPKSTK.

This sequence belongs to the serine-aspartate repeat-containing protein (SDr) family.

It localises to the cytoplasm. Its subcellular location is the chromosome. In terms of biological role, may play a role in DNA-protein cross-links (DPCs) clearance, ensuring the genomic stability by protecting germ cells and early embryos from various sources of damage. Limits replication stress and DNA double-strand breaks. The protein is Germ cell nuclear acidic protein of Drosophila melanogaster (Fruit fly).